We begin with the raw amino-acid sequence, 474 residues long: MKLTLWLVLGAVGVGAVGTGVGFGTKYFLDHKAKSNVDVAFKQRSLRKQVNVGFWNALNFLGSERSFGNQNSKVKTKGIAEIINLLKYDIVGLAEIQPSTESTAERFVDQLNEYADPYTSWSYDLSPVTTSKTASEGQKERILIVYNSQSVKMEGQGWFYDNPEMDISNYVSDGSSSKTRTPKKTKTSKKKPIKKKSSKSKSSKGSKKQKTTNESESETLELKLEQRRVTTRSQSKQQKGQEQATDQTDSEGVTTEEGADNTDTELVETTAETTEQEATTKSTKDTKETKDRTKVDWSRPPYSAEFSTQKGKVVVAFGHFDSPGANTKRGEKIAKMGKGQGAHEYFEAQTTFKAMDSIKQHFNNENILFMADTNIKFGNQAAAFGESKDYTFLTEDNEAWKSSLGTKSGYANPYDKIITSNSFKNKVLDQAETYWNYFDRYLKTKGHNSYLFDLASWGTKPRTISDHAPVGVLF.

The helical transmembrane segment at 3-23 (LTLWLVLGAVGVGAVGTGVGF) threads the bilayer. A disordered region spans residues 171 to 296 (VSDGSSSKTR…KETKDRTKVD (126 aa)). A compositionally biased stretch (basic residues) spans 180–210 (RTPKKTKTSKKKPIKKKSSKSKSSKGSKKQK). The segment covering 231 to 253 (TRSQSKQQKGQEQATDQTDSEGV) has biased composition (polar residues). Positions 257-266 (EGADNTDTEL) are enriched in acidic residues. Residues 267 to 281 (VETTAETTEQEATTK) show a composition bias toward low complexity. Over residues 282–296 (STKDTKETKDRTKVD) the composition is skewed to basic and acidic residues.

It is found in the membrane. This is an uncharacterized protein from Mycoplasma pneumoniae (strain ATCC 29342 / M129 / Subtype 1) (Mycoplasmoides pneumoniae).